Consider the following 258-residue polypeptide: Putative cysteine-rich repeat secretory protein 16 (258 aa).

A signal peptide spans 1-30; the sequence is MYYSSPTCFVLITIFAVVVTQLIFMRTVSS. Gnk2-homologous domains lie at 37–139 and 144–247; these read YLNH…PFDT and DKDN…LYPF.

This sequence belongs to the cysteine-rich repeat secretory protein family.

It localises to the secreted. This chain is Putative cysteine-rich repeat secretory protein 16 (CRRSP16), found in Arabidopsis thaliana (Mouse-ear cress).